The chain runs to 327 residues: Ribonucleoside-diphosphate reductase small chain (327 aa).

Asp70, Glu101, and His104 together coordinate Fe cation. Tyr108 is an active-site residue. 3 residues coordinate Fe cation: Glu164, Glu198, and His201.

The protein belongs to the ribonucleoside diphosphate reductase small chain family. In terms of assembly, heterotetramer composed of a homodimer of the large subunit (R1) and a homodimer of the small subunit (R2). Larger multisubunit protein complex are also active, composed of (R1)n(R2)n. Requires Fe cation as cofactor.

The catalysed reaction is a 2'-deoxyribonucleoside 5'-diphosphate + [thioredoxin]-disulfide + H2O = a ribonucleoside 5'-diphosphate + [thioredoxin]-dithiol. Functionally, ribonucleoside-diphosphate reductase holoenzyme provides the precursors necessary for viral DNA synthesis. Allows virus growth in non-dividing cells. Catalyzes the biosynthesis of deoxyribonucleotides from the corresponding ribonucleotides. In African swine fever virus (isolate Tick/Malawi/Lil 20-1/1983) (ASFV), this protein is Ribonucleoside-diphosphate reductase small chain.